The sequence spans 163 residues: MSSIPISVEGFKQLEKELDRLKKERPGVIQAIKEAREEGDLSENAGYDAARERQGMLEARIKYIESRMAQFNVIDLDTISGDKVMFGATVKIEDLESGEEKEYTLLGPDEADYAKGSISVQSPVARAMLGKEEGDEIVVDAPRGKIHYEIVSIRFLGTKGQQR.

A coiled-coil region spans residues 11–38; the sequence is FKQLEKELDRLKKERPGVIQAIKEAREE.

This sequence belongs to the GreA/GreB family.

Its function is as follows. Necessary for efficient RNA polymerase transcription elongation past template-encoded arresting sites. The arresting sites in DNA have the property of trapping a certain fraction of elongating RNA polymerases that pass through, resulting in locked ternary complexes. Cleavage of the nascent transcript by cleavage factors such as GreA or GreB allows the resumption of elongation from the new 3'terminus. GreA releases sequences of 2 to 3 nucleotides. The protein is Transcription elongation factor GreA of Nitratidesulfovibrio vulgaris (strain ATCC 29579 / DSM 644 / CCUG 34227 / NCIMB 8303 / VKM B-1760 / Hildenborough) (Desulfovibrio vulgaris).